Here is a 412-residue protein sequence, read N- to C-terminus: Ornithine cyclodeaminase (412 aa).

NAD(+) contacts are provided by Asn237, Ala238, Asp316, Thr348, Met349, Leu350, His351, Asp369, Asp392, and Val393.

The protein belongs to the AgrE/ArgZ ornithine cyclodeaminase family. The cofactor is NAD(+).

It catalyses the reaction L-ornithine = L-proline + NH4(+). In terms of biological role, catalyzes the conversion of ornithine to proline, with the release of ammonia. This is Ornithine cyclodeaminase from Methanopyrus kandleri (strain AV19 / DSM 6324 / JCM 9639 / NBRC 100938).